Here is a 244-residue protein sequence, read N- to C-terminus: Krueppel-like factor 9 (244 aa).

2 disordered regions span residues 24–51 and 79–143; these read VPEH…GDPG and PSVC…EKRH. A compositionally biased stretch (basic and acidic residues) spans 32 to 51; it reads DAERLRLPEREVTKEHGDPG. Serine 122 carries the post-translational modification Phosphoserine. The span at 134-143 shows a compositional bias: basic residues; it reads KGKHASEKRH. 3 C2H2-type zinc fingers span residues 143-167, 173-197, and 203-225; these read HKCP…YRVH, FPCT…YRTH, and FRCP…ARRH.

It belongs to the Sp1 C2H2-type zinc-finger protein family. In terms of assembly, interacts with ZZEF1.

The protein localises to the nucleus. Its function is as follows. Transcription factor that binds to GC box promoter elements. Selectively activates mRNA synthesis from genes containing tandem repeats of GC boxes but represses genes with a single GC box. Acts as an epidermal circadian transcription factor regulating keratinocyte proliferation. The protein is Krueppel-like factor 9 (Klf9) of Rattus norvegicus (Rat).